Here is a 315-residue protein sequence, read N- to C-terminus: MLKNKILTTTLSVSLLAPLANPLLENAKAANDTEDIGKGSDIEIIKRTEDKTSNKWGVTQNIQFDFVKDKKYNKDALILKMQGFISSRTTYYNYKKTNHVKAMRWPFQYNIGLKTNDKYVSLINYLPKNKIESTNVSQILGYNIGGNFQSAPSLGGNGSFNYSKSISYTQQNYVSEVEQQNSKSVLWGVKANSFATESGQKSAFDSDLFVGYKPHSKDPRDYFVPDSELPPLVQSGFNPSFIATVSHEKGSSDTSEFEITYGRNMDVTHAIKRSTHYGNSYLDGHRVHNAFVNRNYTVKYEVNWKTHEIKVKGQN.

Residues methionine 1–alanine 29 form the signal peptide.

This sequence belongs to the aerolysin family. As to quaternary structure, toxicity requires sequential binding and synergistic association of a class S and a class F component which form heterooligomeric complexes. HlgC (class S) associates with HlgB (class F) thus forming an CB toxin.

Its function is as follows. Toxin that seems to act by forming pores in the membrane of the cell. Has a hemolytic and a leucotoxic activity. This chain is Gamma-hemolysin component C (hlgC), found in Staphylococcus aureus (strain COL).